The primary structure comprises 392 residues: Lipid-A-disaccharide synthase (392 aa).

This sequence belongs to the LpxB family.

It catalyses the reaction a lipid X + a UDP-2-N,3-O-bis[(3R)-3-hydroxyacyl]-alpha-D-glucosamine = a lipid A disaccharide + UDP + H(+). It functions in the pathway bacterial outer membrane biogenesis; LPS lipid A biosynthesis. Its function is as follows. Condensation of UDP-2,3-diacylglucosamine and 2,3-diacylglucosamine-1-phosphate to form lipid A disaccharide, a precursor of lipid A, a phosphorylated glycolipid that anchors the lipopolysaccharide to the outer membrane of the cell. The protein is Lipid-A-disaccharide synthase of Prochlorococcus marinus (strain MIT 9313).